Consider the following 681-residue polypeptide: Rabphilin-3A (681 aa).

Positions 1–21 (MTDTVVNRWMYPGDGPLQSND) are disordered. One can recognise a RabBD domain in the interval 40–157 (QRKQEELTDE…KRSGAWFFKG (118 aa)). The FYVE-type zinc finger occupies 88–145 (GDGVNRCILCGEQLGMLGSACVVCEDCKKNVCTKCGVETSNNRPHPVWLCKICLEQRE). Positions 94, 97, 111, 114, 119, 122, 137, and 140 each coordinate Zn(2+). The tract at residues 162 to 375 (VLPQPMPIKK…EEEANSYDSD (214 aa)) is disordered. A compositionally biased stretch (basic and acidic residues) spans 199–208 (ARGDMEDRRP). Arg-223 bears the Omega-N-methylarginine mark. Positions 243–252 (RDSEGWDHAH) are enriched in basic and acidic residues. Ser-271 carries the phosphoserine modification. The segment covering 278-296 (APAPVPSPAPPQPVQPGPP) has biased composition (pro residues). Over residues 347 to 356 (AAPYSQAAPA) the composition is skewed to low complexity. Acidic residues predominate over residues 362-375 (AEEEEEEANSYDSD). The 123-residue stretch at 379-501 (TLGALEFSLL…KANQRKNFNI (123 aa)) folds into the C2 1 domain. Met-409, Asp-410, Asp-416, Asp-471, Glu-472, Asp-473, Glu-479, Glu-526, Asp-568, Asp-574, Asp-628, Tyr-629, Asp-630, and Asp-636 together coordinate Ca(2+). A C2 2 domain is found at 537-670 (ERGKILVSLM…NKDKKIERWH (134 aa)). Phosphoserine occurs at positions 679 and 680.

As to quaternary structure, interacts with RAB3B, RAB3C, RAB3D, RAB8A, RAB27A and RAB27B. Interacts with RAB3A; this interaction recruits RPH3A to synaptic vesicules. Interacts (via C2B domain) with SNAP25. Interacts with deubiquitinating enzyme CAND1; this interaction results in the deubiquitination of RPH3A. Interacts with GRIN2A and DLG4; this ternary complex regulates NMDA receptor composition at postsynaptic membranes. Interacts with SNCA. It depends on Ca(2+) as a cofactor. In terms of processing, ubiquitinated. Deubiquitinated by CAND1 to prevent its degradation. As to expression, specifically expressed in brain.

The protein localises to the cytoplasmic vesicle. It localises to the secretory vesicle. The protein resides in the synaptic vesicle membrane. Its subcellular location is the cell projection. It is found in the dendritic spine. The protein localises to the postsynaptic cell membrane. It localises to the membrane. Plays an essential role in docking and fusion steps of regulated exocytosis. At the presynaptic level, RPH3A is recruited by RAB3A to the synaptic vesicle membrane in a GTP-dependent manner where it modulates synaptic vesicle trafficking and calcium-triggered neurotransmitter release. In the post-synaptic compartment, forms a ternary complex with GRIN2A and DLG4 and regulates NMDA receptor stability. Also plays a role in the exocytosis of arginine vasopressin hormone. The chain is Rabphilin-3A (Rph3a) from Mus musculus (Mouse).